The chain runs to 282 residues: NH(3)-dependent NAD(+) synthetase (282 aa).

Residue 51–58 (GISGGVDS) coordinates ATP. Asp-57 is a Mg(2+) binding site. Arg-148 is a binding site for deamido-NAD(+). Thr-168 is a binding site for ATP. Glu-173 is a Mg(2+) binding site. Residues Lys-181 and Asp-188 each contribute to the deamido-NAD(+) site. ATP-binding residues include Lys-197 and Thr-219. 268–269 (HK) contacts deamido-NAD(+).

This sequence belongs to the NAD synthetase family. Homodimer.

It carries out the reaction deamido-NAD(+) + NH4(+) + ATP = AMP + diphosphate + NAD(+) + H(+). It functions in the pathway cofactor biosynthesis; NAD(+) biosynthesis; NAD(+) from deamido-NAD(+) (ammonia route): step 1/1. Functionally, catalyzes the ATP-dependent amidation of deamido-NAD to form NAD. Uses ammonia as a nitrogen source. The protein is NH(3)-dependent NAD(+) synthetase of Burkholderia lata (strain ATCC 17760 / DSM 23089 / LMG 22485 / NCIMB 9086 / R18194 / 383).